A 356-amino-acid chain; its full sequence is UDP-N-acetylglucosamine--N-acetylmuramyl-(pentapeptide) pyrophosphoryl-undecaprenol N-acetylglucosamine transferase (356 aa).

2 residues coordinate UDP-N-acetyl-alpha-D-glucosamine: Ser195 and Gln287.

Belongs to the glycosyltransferase 28 family. MurG subfamily.

The protein localises to the cell membrane. It carries out the reaction Mur2Ac(oyl-L-Ala-gamma-D-Glu-L-Lys-D-Ala-D-Ala)-di-trans,octa-cis-undecaprenyl diphosphate + UDP-N-acetyl-alpha-D-glucosamine = beta-D-GlcNAc-(1-&gt;4)-Mur2Ac(oyl-L-Ala-gamma-D-Glu-L-Lys-D-Ala-D-Ala)-di-trans,octa-cis-undecaprenyl diphosphate + UDP + H(+). It participates in cell wall biogenesis; peptidoglycan biosynthesis. Cell wall formation. Catalyzes the transfer of a GlcNAc subunit on undecaprenyl-pyrophosphoryl-MurNAc-pentapeptide (lipid intermediate I) to form undecaprenyl-pyrophosphoryl-MurNAc-(pentapeptide)GlcNAc (lipid intermediate II). In Streptococcus sanguinis (strain SK36), this protein is UDP-N-acetylglucosamine--N-acetylmuramyl-(pentapeptide) pyrophosphoryl-undecaprenol N-acetylglucosamine transferase.